Reading from the N-terminus, the 836-residue chain is MEADNYSPEHSDDGGATPVQDERDSASDDEGNEQRSEPGSPEHQSEDEHSDVEDHKHSSDSGSDNEKGTEHDSEDEHRPRNSSDLENHDASDSENEESHNRIASDSEDDGRRQKNSDSDRSPVKGAASDSDEEPVRHSASDSEDDVPRKQQANDSEDERHIKKTASDSEDEAPAKHRVSDTEDKAPPKQVASDSEDEASPKQVASDSKDEAPPKHAASDSEDEAPPKLAGSDSEDEAPAKRKVSSSEDETPSKHAVSASKVKKSVGSEDKTRGKRAIIDSDDDDDDDVPVKRAASDSEEETHPKGKASDSEDEAPSKQPSDSEEETPAKVAANDSEDEFPRMKRKIVSSDDSDDEDDRKPLQKKKKSPRRSSESDSSDKVDGKKLQASESDEEGEKASKKKKSNIVSDSEDEDAADKSGNKKSRILSDGEDSDSDAASEKPKQKKKKSASSDSEEEDERKSKTETKSADKLFGSESDSENEEENLIADIFGESGDEEEEEFTGFNQEDLEGEKTVTSVNRQQAAAADSDSDDDMKSGKMGDYKSDFDLMLERKKSMSGKQRRNRDGGTFISDADDVVNAMIMKMTEAAEEDRNLNSSKKPALKKLTLLPTVVMHLKKQDLKETFIDSGVMSAIKEWLTPLPDRSLPALKIREELLKILQELPSVSQETLKHSGIGRAIMYLYKHPKESRPNKDIAGKLINEWSRPIFGLTSNYKGMTREEREQRDIEQMPQRRRMSSSGGQTPRRDLDKVLTGEEKALRPGEPGFCARARVPLPSNKDYVVRPKWNVEMETSQYQGSAKKGVSRIDKQMRKFVDIKKKNRFGHAVKISIEGNKMPL.

The tract at residues 1–542 (MEADNYSPEH…DMKSGKMGDY (542 aa)) is disordered. Basic and acidic residues-rich tracts occupy residues 20–36 (QDER…EQRS), 43–122 (HQSE…DRSP), 133–148 (EPVR…DVPR), 157–186 (DERH…DKAP), 206–218 (DSKD…HAAS), 288–309 (VPVK…KASD), 370–386 (RSSE…KKLQ), and 458–469 (ERKSKTETKSAD). The span at 476-485 (SDSENEEENL) shows a compositional bias: acidic residues. The segment covering 533–542 (DMKSGKMGDY) has biased composition (basic and acidic residues). The 79-residue stretch at 631-709 (SAIKEWLTPL…NEWSRPIFGL (79 aa)) folds into the TFIIS N-terminal domain. Residues 714–746 (KGMTREEREQRDIEQMPQRRRMSSSGGQTPRRD) are disordered. Residues 716–727 (MTREEREQRDIE) show a composition bias toward basic and acidic residues.

Belongs to the IWS1 family.

It is found in the nucleus. Transcription factor which plays a key role in defining the composition of the RNA polymerase II (RNAPII) elongation complex and in modulating the production of mature mRNA transcripts. In Xenopus laevis (African clawed frog), this protein is Protein IWS1 homolog A (iws1-a).